The chain runs to 693 residues: Golgin subfamily A member 6C (693 aa).

3 disordered regions span residues 20–71 (NKLA…DSQY), 497–547 (LPGE…GTEQ), and 629–693 (NPAD…MQDT). Residues 73-611 (ELAVALESSS…KLLELQELVL (539 aa)) are a coiled coil. Residues 537-547 (LPKEKADGTEQ) show a composition bias toward basic and acidic residues. The span at 679–693 (PVQQIVQLSPVMQDT) shows a compositional bias: polar residues.

It belongs to the GOLGA6 family.

This Homo sapiens (Human) protein is Golgin subfamily A member 6C (GOLGA6C).